Consider the following 297-residue polypeptide: 4-hydroxy-tetrahydrodipicolinate synthase (297 aa).

Thr46 lines the pyruvate pocket. Residue Tyr134 is the Proton donor/acceptor of the active site. Residue Lys162 is the Schiff-base intermediate with substrate of the active site. Ile204 serves as a coordination point for pyruvate.

Belongs to the DapA family. Homotetramer; dimer of dimers.

It is found in the cytoplasm. It carries out the reaction L-aspartate 4-semialdehyde + pyruvate = (2S,4S)-4-hydroxy-2,3,4,5-tetrahydrodipicolinate + H2O + H(+). The protein operates within amino-acid biosynthesis; L-lysine biosynthesis via DAP pathway; (S)-tetrahydrodipicolinate from L-aspartate: step 3/4. Its function is as follows. Catalyzes the condensation of (S)-aspartate-beta-semialdehyde [(S)-ASA] and pyruvate to 4-hydroxy-tetrahydrodipicolinate (HTPA). The polypeptide is 4-hydroxy-tetrahydrodipicolinate synthase (Stenotrophomonas maltophilia (strain R551-3)).